The following is a 167-amino-acid chain: Putative universal stress protein SSP1056 (167 aa).

This sequence belongs to the universal stress protein A family.

It is found in the cytoplasm. The sequence is that of Putative universal stress protein SSP1056 from Staphylococcus saprophyticus subsp. saprophyticus (strain ATCC 15305 / DSM 20229 / NCIMB 8711 / NCTC 7292 / S-41).